Here is a 98-residue protein sequence, read N- to C-terminus: Acylphosphatase (98 aa).

The 87-residue stretch at 10-96 (ARLLRIRGRV…TDGAGFDCLP (87 aa)) folds into the Acylphosphatase-like domain. Catalysis depends on residues Arg25 and Asn43.

It belongs to the acylphosphatase family.

The catalysed reaction is an acyl phosphate + H2O = a carboxylate + phosphate + H(+). The sequence is that of Acylphosphatase (acyP) from Azoarcus sp. (strain BH72).